The following is a 183-amino-acid chain: Probable RNA 2'-phosphotransferase (183 aa).

The protein belongs to the KptA/TPT1 family.

Its function is as follows. Removes the 2'-phosphate from RNA via an intermediate in which the phosphate is ADP-ribosylated by NAD followed by a presumed transesterification to release the RNA and generate ADP-ribose 1''-2''-cyclic phosphate (APPR&gt;P). May function as an ADP-ribosylase. The polypeptide is Probable RNA 2'-phosphotransferase (Clostridium perfringens (strain 13 / Type A)).